Consider the following 122-residue polypeptide: Small ribosomal subunit protein uS12c (122 aa).

It belongs to the universal ribosomal protein uS12 family. As to quaternary structure, part of the 30S ribosomal subunit.

Its subcellular location is the plastid. It localises to the chloroplast. Its function is as follows. With S4 and S5 plays an important role in translational accuracy. Located at the interface of the 30S and 50S subunits. The chain is Small ribosomal subunit protein uS12c (rps12) from Cyanidioschyzon merolae (strain NIES-3377 / 10D) (Unicellular red alga).